We begin with the raw amino-acid sequence, 206 residues long: Large ribosomal subunit protein uL4 (206 aa).

Positions K49–R73 are disordered.

Belongs to the universal ribosomal protein uL4 family. As to quaternary structure, part of the 50S ribosomal subunit.

In terms of biological role, one of the primary rRNA binding proteins, this protein initially binds near the 5'-end of the 23S rRNA. It is important during the early stages of 50S assembly. It makes multiple contacts with different domains of the 23S rRNA in the assembled 50S subunit and ribosome. Its function is as follows. Forms part of the polypeptide exit tunnel. In Paramagnetospirillum magneticum (strain ATCC 700264 / AMB-1) (Magnetospirillum magneticum), this protein is Large ribosomal subunit protein uL4.